Here is a 306-residue protein sequence, read N- to C-terminus: 26S proteasome regulatory subunit RPN11 (306 aa).

Residues 27-162 enclose the MPN domain; the sequence is VYISSIALLK…IDAFRLIDTG (136 aa). Residues His109, His111, and Asp122 each coordinate Zn(2+). The JAMM motif signature appears at 109–122; it reads HSHPGFGCWLSSVD.

Belongs to the peptidase M67A family.

In terms of biological role, acts as a regulatory subunit of the 26 proteasome which is involved in the ATP-dependent degradation of ubiquitinated proteins. The chain is 26S proteasome regulatory subunit RPN11 (RPN11) from Candida glabrata (strain ATCC 2001 / BCRC 20586 / JCM 3761 / NBRC 0622 / NRRL Y-65 / CBS 138) (Yeast).